The sequence spans 269 residues: Tryptophan synthase alpha chain (269 aa).

Residues Glu-49 and Asp-60 each act as proton acceptor in the active site.

Belongs to the TrpA family. Tetramer of two alpha and two beta chains.

The enzyme catalyses (1S,2R)-1-C-(indol-3-yl)glycerol 3-phosphate + L-serine = D-glyceraldehyde 3-phosphate + L-tryptophan + H2O. Its pathway is amino-acid biosynthesis; L-tryptophan biosynthesis; L-tryptophan from chorismate: step 5/5. The alpha subunit is responsible for the aldol cleavage of indoleglycerol phosphate to indole and glyceraldehyde 3-phosphate. The chain is Tryptophan synthase alpha chain from Cronobacter sakazakii (strain ATCC BAA-894) (Enterobacter sakazakii).